We begin with the raw amino-acid sequence, 380 residues long: Cytochrome b (380 aa).

The next 4 membrane-spanning stretches (helical) occupy residues 34 to 54, 78 to 99, 114 to 134, and 179 to 199; these read FGSLLPVCLIAQIATGLFLAM, WLLRNLHANGASFFFICIYFHI, WNIGVILLLLVMATAFVGYVL, and FFTFDFILLFIIAATSLIHLL. 2 residues coordinate heme b: H84 and H98. A heme b-binding site is contributed by H197. Position 202 (H202) interacts with a ubiquinone. Transmembrane regions (helical) follow at residues 227-247, 289-309, 321-341, and 348-368; these read FKDLLGFIILLGALAILSTFA, LGGVLALLLSIMVLFLMPITH, TAKAFFWALIANTIILTWIGG, and FISIGQIASGLYFLIFVLIIP.

It belongs to the cytochrome b family. In terms of assembly, the cytochrome bc1 complex contains 3 respiratory subunits (MT-CYB, CYC1 and UQCRFS1), 2 core proteins (UQCRC1 and UQCRC2) and probably 6 low-molecular weight proteins. The cofactor is heme b.

It is found in the mitochondrion inner membrane. In terms of biological role, component of the ubiquinol-cytochrome c reductase complex (complex III or cytochrome b-c1 complex) that is part of the mitochondrial respiratory chain. The b-c1 complex mediates electron transfer from ubiquinol to cytochrome c. Contributes to the generation of a proton gradient across the mitochondrial membrane that is then used for ATP synthesis. The chain is Cytochrome b (mt-cyb) from Glandirana rugosa (Japanese wrinkled frog).